We begin with the raw amino-acid sequence, 1620 residues long: ALK tyrosine kinase receptor (1620 aa).

A signal peptide spans 1-18 (MGAIGLLWLLPLLLSTAA). The Extracellular portion of the chain corresponds to 19–1038 (VGSGMGTGQR…PHLPLSLILS (1020 aa)). Residues 48–70 (RLQRKSLAVDFVVPSLFRVYARD) form a heparin-binding region region. N-linked (GlcNAc...) asparagine glycans are attached at residues Asn-169, Asn-244, Asn-285, Asn-324, Asn-411, Asn-424, Asn-445, Asn-563, Asn-571, and Asn-627. The region spanning 264–427 (LECSFDFPCE…DFFALKNCSE (164 aa)) is the MAM 1 domain. Positions 437-473 (LQSSFTCWNGTVLQLGQACDFHQDCAQGEDESQMCRK) constitute an LDL-receptor class A domain. An MAM 2 domain is found at 478 to 636 (FYCNFEDGFC…NISISLDCYL (159 aa)). Positions 650-674 (PKSRNLFERNPNKELKPGENSPRQT) are disordered. The segment covering 654 to 666 (NLFERNPNKELKP) has biased composition (basic and acidic residues). The cysteines at positions 688 and 701 are disulfide-linked. Asn-709 carries N-linked (GlcNAc...) asparagine glycosylation. Residues Cys-783 and Cys-794 are joined by a disulfide bond. N-linked (GlcNAc...) asparagine glycosylation is found at Asn-808, Asn-863, Asn-864, and Asn-886. The cysteines at positions 906 and 928 are disulfide-linked. Asn-986 carries an N-linked (GlcNAc...) asparagine glycan. Cystine bridges form between Cys-987-Cys-995, Cys-990-Cys-1006, and Cys-1008-Cys-1021. The tract at residues 987 to 1025 (CSHCEVDECHMDPESHKVICFCDHGTVLAEDGVSCIVSP) is EGF-like. A helical transmembrane segment spans residues 1039 to 1059 (VVTSALVAALVLAFSGIMIVY). At 1060-1620 (RRKHQELQAM…SKNSMNQPGP (561 aa)) the chain is on the cytoplasmic side. Residues Tyr-1078, Tyr-1092, and Tyr-1096 each carry the phosphotyrosine modification. The region spanning 1116 to 1392 (ITLIRGLGHG…IEYCTQDPDV (277 aa)) is the Protein kinase domain. ATP is bound at residue His-1124. Position 1131 is a phosphotyrosine (Tyr-1131). ATP is bound by residues Lys-1150 and 1197 to 1199 (ELM). The Proton acceptor role is filled by Asp-1249. Residue Asp-1270 coordinates ATP. Tyr-1278 carries the post-translational modification Phosphotyrosine. Residues 1408–1463 (EEKVPVRPKDPEGVPPLLVSQQAKREEERSPAAPPPLPTTSSGKAAKKPTAAEISV) form a disordered region. Positions 1410–1419 (KVPVRPKDPE) are enriched in basic and acidic residues. The residue at position 1507 (Tyr-1507) is a Phosphotyrosine. The interval 1514–1540 (KPTKKNNPIAKKEPHDRGNLGLEGSCT) is disordered. A Phosphotyrosine modification is found at Tyr-1604.

Belongs to the protein kinase superfamily. Tyr protein kinase family. Insulin receptor subfamily. As to quaternary structure, homodimer; homodimerizes following heparin- and ligand-binding. Interacts with CBL, IRS1, PIK3R1 and PLCG1. Interacts with FRS2 and SHC1. Interacts with PTN and MDK. Post-translationally, phosphorylated at tyrosine residues by autocatalysis, which activates kinase activity. In cells not stimulated by a ligand, receptor protein tyrosine phosphatase beta and zeta complex (PTPRB/PTPRZ1) dephosphorylates ALK at the sites in ALK that are undergoing autophosphorylation through autoactivation. Phosphorylation at Tyr-1507 is critical for SHC1 association. In terms of processing, N-glycosylated. In terms of tissue distribution, expressed in brain and CNS. Also expressed in the small intestine and testis, but not in normal lymphoid cells.

It localises to the cell membrane. The enzyme catalyses L-tyrosyl-[protein] + ATP = O-phospho-L-tyrosyl-[protein] + ADP + H(+). Its activity is regulated as follows. Activated upon ALKAL2 ligand-binding. ALKAL2-driven activation is coupled with heparin-binding. Following ligand-binding, homodimerizes and autophosphorylates, activating its kinase activity. Inactivated through dephosphorylation by receptor protein tyrosine phosphatase beta and zeta complex (PTPRB/PTPRZ1) when there is no stimulation by a ligand. Staurosporine, crizotinib and CH5424802 act as inhibitors of ALK kinase activity. Neuronal receptor tyrosine kinase that is essentially and transiently expressed in specific regions of the central and peripheral nervous systems and plays an important role in the genesis and differentiation of the nervous system. Also acts as a key thinness protein involved in the resistance to weight gain: in hypothalamic neurons, controls energy expenditure acting as a negative regulator of white adipose tissue lipolysis and sympathetic tone to fine-tune energy homeostasis. Following activation by ALKAL2 ligand at the cell surface, transduces an extracellular signal into an intracellular response. In contrast, ALKAL1 is not a potent physiological ligand for ALK. Ligand-binding to the extracellular domain induces tyrosine kinase activation, leading to activation of the mitogen-activated protein kinase (MAPK) pathway. Phosphorylates almost exclusively at the first tyrosine of the Y-x-x-x-Y-Y motif. Induces tyrosine phosphorylation of CBL, FRS2, IRS1 and SHC1, as well as of the MAP kinases MAPK1/ERK2 and MAPK3/ERK1. ALK activation may also be regulated by pleiotrophin (PTN) and midkine (MDK). PTN-binding induces MAPK pathway activation, which is important for the anti-apoptotic signaling of PTN and regulation of cell proliferation. MDK-binding induces phosphorylation of the ALK target insulin receptor substrate (IRS1), activates mitogen-activated protein kinases (MAPKs) and PI3-kinase, resulting also in cell proliferation induction. Drives NF-kappa-B activation, probably through IRS1 and the activation of the AKT serine/threonine kinase. Recruitment of IRS1 to activated ALK and the activation of NF-kappa-B are essential for the autocrine growth and survival signaling of MDK. This is ALK tyrosine kinase receptor from Homo sapiens (Human).